The following is a 398-amino-acid chain: MSDTILNPYFGEFGGMYVPEILVPVLQQLEKAFVEARNDPDFQQEFQDLLKNYAGRPTALTLCRNLTKGTKTKLYLKREDLLHGGAHKTNQVLGQILLAKRMGKTRIIAETGAGQHGVATALACAMLDMPCRVYMGSKDVERQSPNVFRMRLMGTEVVPVEKGSCSLKDACCEAMRDWSANYENTHYLLGTAAGPHPFPTIVREFQKMIGEETKRQILEKEGCLPDAVIAAVGGGSNAIGMFTDFIDETNVRLIGVEPAGKGIETGEHGAPLKHGKTGIYFGMKSPIMQTEDGQIEESYSISAGLDFPSVGPQHAYLNSIGRAEYPSITDDEALAAFKELAKHEGIIPALESSHALAQALKMIKSNPEKEQLLVVNLSGRGDKDIFTVDKILRAKGEL.

N6-(pyridoxal phosphate)lysine is present on Lys88.

The protein belongs to the TrpB family. Tetramer of two alpha and two beta chains. The cofactor is pyridoxal 5'-phosphate.

It catalyses the reaction (1S,2R)-1-C-(indol-3-yl)glycerol 3-phosphate + L-serine = D-glyceraldehyde 3-phosphate + L-tryptophan + H2O. Its pathway is amino-acid biosynthesis; L-tryptophan biosynthesis; L-tryptophan from chorismate: step 5/5. Its function is as follows. The beta subunit is responsible for the synthesis of L-tryptophan from indole and L-serine. The polypeptide is Tryptophan synthase beta chain (Actinobacillus succinogenes (strain ATCC 55618 / DSM 22257 / CCUG 43843 / 130Z)).